A 445-amino-acid chain; its full sequence is Probable fructoselysine/psicoselysine transporter FrlA (445 aa).

Transmembrane regions (helical) follow at residues 10 to 30, 38 to 58, 93 to 113, 121 to 141, 155 to 175, 181 to 201, 236 to 256, 273 to 293, 334 to 354, 355 to 375, 389 to 410, and 417 to 435; these read LGFW…GIFV, AAGT…IVIP, GWAS…LAIV, PIDP…FMLL, LITI…IFWF, AAPT…LAGI, CLLV…LMPF, IPAL…IVIL, IILQ…TSLL, GYFT…IIWC, AFGL…STFV, and LICA…AFWA.

Belongs to the amino acid-polyamine-organocation (APC) superfamily.

The protein resides in the cell inner membrane. The catalysed reaction is N(6)-(D-fructosyl)-L-lysine(in) = N(6)-(D-fructosyl)-L-lysine(out). It carries out the reaction N(6)-(D-psicosyl)-L-lysine(in) = N(6)-(D-psicosyl)-L-lysine(out). It functions in the pathway carbohydrate metabolism; fructoselysine degradation. Functionally, is likely involved in the transport of fructoselysine and psicoselysine to the cytoplasm, where they are degraded. The sequence is that of Probable fructoselysine/psicoselysine transporter FrlA from Escherichia coli (strain K12).